The primary structure comprises 78 residues: Vacuolar ATPase assembly integral membrane protein VMA21 (78 aa).

The Cytoplasmic portion of the chain corresponds to 1–14 (MPADIPKSVVQKLV). A helical transmembrane segment spans residues 15 to 35 (FFTAAMIICPVATFFICQYLF). The Lumenal segment spans residues 36-38 (SNN). A helical transmembrane segment spans residues 39–59 (AIISGGVSALVANIVLIGYVV). The Cytoplasmic segment spans residues 60 to 78 (AAFMEDTTEQEPEETKKSR). The Prevents secretion from ER motif lies at 75 to 78 (KKSR).

This sequence belongs to the VMA21 family.

The protein resides in the endoplasmic reticulum membrane. It is found in the endoplasmic reticulum-Golgi intermediate compartment membrane. The protein localises to the cytoplasmic vesicle. It localises to the COPII-coated vesicle membrane. Functionally, required for the assembly of the V0 complex of the vacuolar ATPase (V-ATPase) in the endoplasmic reticulum. The sequence is that of Vacuolar ATPase assembly integral membrane protein VMA21 from Debaryomyces hansenii (strain ATCC 36239 / CBS 767 / BCRC 21394 / JCM 1990 / NBRC 0083 / IGC 2968) (Yeast).